Here is a 312-residue protein sequence, read N- to C-terminus: Homoserine O-succinyltransferase (312 aa).

C142 acts as the Acyl-thioester intermediate in catalysis. The substrate site is built by K163 and S192. The Proton acceptor role is filled by H235. Residue E237 is part of the active site. Residue R249 participates in substrate binding.

This sequence belongs to the MetA family.

It is found in the cytoplasm. The enzyme catalyses L-homoserine + succinyl-CoA = O-succinyl-L-homoserine + CoA. The protein operates within amino-acid biosynthesis; L-methionine biosynthesis via de novo pathway; O-succinyl-L-homoserine from L-homoserine: step 1/1. In terms of biological role, transfers a succinyl group from succinyl-CoA to L-homoserine, forming succinyl-L-homoserine. The chain is Homoserine O-succinyltransferase from Shewanella halifaxensis (strain HAW-EB4).